Here is a 133-residue protein sequence, read N- to C-terminus: Putative biopolymer transport protein ExbD-like 2 (133 aa).

At 1–9 (MKKVESMNV) the chain is on the cytoplasmic side. A helical transmembrane segment spans residues 10-30 (VPFIDIMLVLLVIVLTTASFV). The Periplasmic segment spans residues 31-133 (QTSKLPISIP…LVEDKKNQKN (103 aa)).

It belongs to the ExbD/TolR family.

It localises to the cell inner membrane. The sequence is that of Putative biopolymer transport protein ExbD-like 2 from Helicobacter pylori (strain J99 / ATCC 700824) (Campylobacter pylori J99).